Here is a 458-residue protein sequence, read N- to C-terminus: Ribulose bisphosphate carboxylase (458 aa).

Asparagine 111 provides a ligand contact to substrate. Lysine 166 (proton acceptor) is an active-site residue. Lysine 168 serves as a coordination point for substrate. Lysine 191, aspartate 193, and glutamate 194 together coordinate Mg(2+). At lysine 191 the chain carries N6-carboxylysine. Histidine 287 acts as the Proton acceptor in catalysis. 3 residues coordinate substrate: arginine 288, histidine 321, and serine 368.

The protein belongs to the RuBisCO large chain family. Type II subfamily. As to quaternary structure, homodimer. It depends on Mg(2+) as a cofactor.

The catalysed reaction is 2 (2R)-3-phosphoglycerate + 2 H(+) = D-ribulose 1,5-bisphosphate + CO2 + H2O. It carries out the reaction D-ribulose 1,5-bisphosphate + O2 = 2-phosphoglycolate + (2R)-3-phosphoglycerate + 2 H(+). Its function is as follows. RuBisCO catalyzes two reactions: the carboxylation of D-ribulose 1,5-bisphosphate, the primary event in carbon dioxide fixation, as well as the oxidative fragmentation of the pentose substrate. Both reactions occur simultaneously and in competition at the same active site. The polypeptide is Ribulose bisphosphate carboxylase (cbbM) (Rhodobacter capsulatus (strain ATCC BAA-309 / NBRC 16581 / SB1003)).